Here is a 307-residue protein sequence, read N- to C-terminus: MIAYENIEFFICLVNVLGNNMYNILFFIFLSIAIPFLLFLAWKQHLKTKEIRSYLLKEGYNIIFNGEGNSYLAFNISNATFRAGNLTSNDYFQASISYIHDYRWEWKEVEAKKINNIFIIYISNIDFPSQKLFYRNNKSLAEIDWAKLQAIFHQPYEIQNDVMQDNNNTHYDFFISHAKEDKDTFVRPLVDELNRLGVIIWYDEQTLEVGDSLRRNIDLGLRKANYGIVILSHNFLNKKWTQYELDSLINRAVYDDNKIILPIWHNINAQEVSKYSHYLADKMALQTSLYSVKEIARELAEIAYRRR.

The helical transmembrane segment at Tyr22–Trp42 threads the bilayer. A TIR domain is found at Thr169–Ala303. Residues Ala178–Lys179 and Glu208 contribute to the NAD(+) site. Residue Glu244 is part of the active site.

As to quaternary structure, interacts with host MYD88. Interacts with host TLR4.

The protein resides in the secreted. The protein localises to the membrane. It carries out the reaction NAD(+) + H2O = ADP-D-ribose + nicotinamide + H(+). The enzyme catalyses NADP(+) + H2O = ADP-D-ribose 2'-phosphate + nicotinamide + H(+). Functionally, virulence factor that suppresses host Toll-like receptor (TLR)-mediated cytokine production upon infection, thereby increasing bacterial burden in the urinary tract and promoting renal tissue damage. Acts as a NAD(+) hydrolase (NADase) by catalyzing cleavage of NAD(+) into ADP-D-ribose (ADPR) and nicotinamide. Also able to hydrolyze NADP(+), but not other NAD(+)-related molecules. The chain is NAD(+) hydrolase TcpC from Escherichia coli O6:H1 (strain CFT073 / ATCC 700928 / UPEC).